Here is a 207-residue protein sequence, read N- to C-terminus: Dephospho-CoA kinase (207 aa).

The region spanning 4-204 is the DPCK domain; that stretch reads VVGLTGGIGS…HLYLQFAEIF (201 aa). 12–17 contacts ATP; the sequence is GSGKST.

The protein belongs to the CoaE family.

The protein resides in the cytoplasm. The catalysed reaction is 3'-dephospho-CoA + ATP = ADP + CoA + H(+). It functions in the pathway cofactor biosynthesis; coenzyme A biosynthesis; CoA from (R)-pantothenate: step 5/5. Its function is as follows. Catalyzes the phosphorylation of the 3'-hydroxyl group of dephosphocoenzyme A to form coenzyme A. The chain is Dephospho-CoA kinase from Aggregatibacter actinomycetemcomitans (Actinobacillus actinomycetemcomitans).